We begin with the raw amino-acid sequence, 252 residues long: Protein Flattop homolog (252 aa).

The tract at residues 177–252 is disordered; sequence TEKRRRKRTI…EKERKAAKGH (76 aa). Residues 218-252 show a composition bias toward basic and acidic residues; it reads PKDKPKDKPKDKEAGKKDKTKDKGKEKERKAAKGH.

This sequence belongs to the Flattop family.

This Drosophila melanogaster (Fruit fly) protein is Protein Flattop homolog.